A 271-amino-acid polypeptide reads, in one-letter code: 5'-nucleotidase SurE (271 aa).

Residues D14, D15, S46, and N104 each contribute to the a divalent metal cation site.

This sequence belongs to the SurE nucleotidase family. A divalent metal cation is required as a cofactor.

The protein resides in the cytoplasm. It catalyses the reaction a ribonucleoside 5'-phosphate + H2O = a ribonucleoside + phosphate. Its function is as follows. Nucleotidase that shows phosphatase activity on nucleoside 5'-monophosphates. The protein is 5'-nucleotidase SurE of Gloeothece citriformis (strain PCC 7424) (Cyanothece sp. (strain PCC 7424)).